The following is a 490-amino-acid chain: Glutamate--tRNA ligase (490 aa).

A 'HIGH' region motif is present at residues 12-22; that stretch reads PSPTGTPHVGL. Residues 256-260 carry the 'KMSKS' region motif; the sequence is KLSKR. Residue Lys-259 coordinates ATP.

Belongs to the class-I aminoacyl-tRNA synthetase family. Glutamate--tRNA ligase type 1 subfamily. As to quaternary structure, monomer.

It is found in the cytoplasm. It catalyses the reaction tRNA(Glu) + L-glutamate + ATP = L-glutamyl-tRNA(Glu) + AMP + diphosphate. Its function is as follows. Catalyzes the attachment of glutamate to tRNA(Glu) in a two-step reaction: glutamate is first activated by ATP to form Glu-AMP and then transferred to the acceptor end of tRNA(Glu). This chain is Glutamate--tRNA ligase, found in Mycobacterium sp. (strain JLS).